The chain runs to 412 residues: Phosphoglycerate kinase 1 (412 aa).

Substrate is bound by residues D28–N30, H65–R68, R122, and R162. ATP-binding positions include E336 and G361–T364.

Belongs to the phosphoglycerate kinase family. As to quaternary structure, monomer.

The protein localises to the cytoplasm. The enzyme catalyses (2R)-3-phosphoglycerate + ATP = (2R)-3-phospho-glyceroyl phosphate + ADP. It functions in the pathway carbohydrate degradation; glycolysis; pyruvate from D-glyceraldehyde 3-phosphate: step 2/5. In Methanosarcina acetivorans (strain ATCC 35395 / DSM 2834 / JCM 12185 / C2A), this protein is Phosphoglycerate kinase 1.